A 290-amino-acid chain; its full sequence is MLKTENLSVGYGNYVVVEGINLEINRGEILCIIGPNGAGKSTLLKTIATYLKPKKGVVYLNGKKIHDLKPKDLAKEMAVVLTERVNPGNMTGFDVVAIGRHPYTDLFGRLTERDKKIIIESARAVNAEYLLEKNFFEMSDGERQKIMIARALAQEPKVLILDEPTSFLDAKHKIELTLLLRKLADEKNLAIVVTLHDIELALRIADKMALIKNHKVIAYGYPENVMKREIVNELYDLKNANYSEVIGYFELKNNPIKNKKIFVICGGGTGANVLRYLVKNRYDVVVGHLA.

The region spanning 2-238 (LKTENLSVGY…EIVNELYDLK (237 aa)) is the ABC transporter domain. 34 to 41 (GPNGAGKS) serves as a coordination point for ATP.

It belongs to the ABC transporter superfamily.

This is an uncharacterized protein from Methanocaldococcus jannaschii (strain ATCC 43067 / DSM 2661 / JAL-1 / JCM 10045 / NBRC 100440) (Methanococcus jannaschii).